Here is a 468-residue protein sequence, read N- to C-terminus: Dihydrolipoyl dehydrogenase (468 aa).

FAD is bound by residues 39 to 47 (EKGNLGGVC), K56, and A119. The cysteines at positions 47 and 52 are disulfide-linked. NAD(+) contacts are provided by residues 183–187 (GGGYI), E206, and 271–274 (TVGR). FAD-binding residues include D314 and A322. The active-site Proton acceptor is H446.

Belongs to the class-I pyridine nucleotide-disulfide oxidoreductase family. As to quaternary structure, homodimer. Requires FAD as cofactor.

It localises to the cytoplasm. Its subcellular location is the membrane. The enzyme catalyses N(6)-[(R)-dihydrolipoyl]-L-lysyl-[protein] + NAD(+) = N(6)-[(R)-lipoyl]-L-lysyl-[protein] + NADH + H(+). In terms of biological role, lipoamide dehydrogenase is a component of the alpha-ketoacid dehydrogenase complexes. This Staphylococcus aureus (strain COL) protein is Dihydrolipoyl dehydrogenase (pdhD).